Consider the following 280-residue polypeptide: Acyl-[acyl-carrier-protein]--UDP-N-acetylglucosamine O-acyltransferase (280 aa).

This sequence belongs to the transferase hexapeptide repeat family. LpxA subfamily. Homotrimer.

It localises to the cytoplasm. The enzyme catalyses a (3R)-hydroxyacyl-[ACP] + UDP-N-acetyl-alpha-D-glucosamine = a UDP-3-O-[(3R)-3-hydroxyacyl]-N-acetyl-alpha-D-glucosamine + holo-[ACP]. Its pathway is glycolipid biosynthesis; lipid IV(A) biosynthesis; lipid IV(A) from (3R)-3-hydroxytetradecanoyl-[acyl-carrier-protein] and UDP-N-acetyl-alpha-D-glucosamine: step 1/6. Its function is as follows. Involved in the biosynthesis of lipid A, a phosphorylated glycolipid that anchors the lipopolysaccharide to the outer membrane of the cell. This Chlamydia muridarum (strain MoPn / Nigg) protein is Acyl-[acyl-carrier-protein]--UDP-N-acetylglucosamine O-acyltransferase.